Consider the following 150-residue polypeptide: Ribonuclease pancreatic delta-type (150 aa).

The first 25 residues, 1–25, serve as a signal peptide directing secretion; it reads MGLEKSFILFSLLVLVLGWVQPSLG. Arg-35 is a binding site for substrate. His-37 functions as the Proton acceptor in the catalytic mechanism. 4 cysteine pairs are disulfide-bonded: Cys-51–Cys-110, Cys-65–Cys-121, Cys-83–Cys-136, and Cys-90–Cys-98. Substrate is bound by residues 66–70, Lys-91, and Arg-111; that span reads KRVNT. The active-site Proton donor is the His-145.

This sequence belongs to the pancreatic ribonuclease family. As to quaternary structure, monomer.

Its subcellular location is the secreted. The catalysed reaction is an [RNA] containing cytidine + H2O = an [RNA]-3'-cytidine-3'-phosphate + a 5'-hydroxy-ribonucleotide-3'-[RNA].. It catalyses the reaction an [RNA] containing uridine + H2O = an [RNA]-3'-uridine-3'-phosphate + a 5'-hydroxy-ribonucleotide-3'-[RNA].. Endonuclease that catalyzes the cleavage of RNA on the 3' side of pyrimidine nucleotides. Acts on single-stranded and double-stranded RNA. This Rattus norvegicus (Rat) protein is Ribonuclease pancreatic delta-type (Rnase1d).